The following is a 111-amino-acid chain: UPF0375 protein ule-4 (111 aa).

A signal peptide spans 1–18 (MNSRLVLLLAVSVALVSA). N-linked (GlcNAc...) asparagine glycans are attached at residues Asn23 and Asn58.

This sequence belongs to the UPF0375 family.

It is found in the secreted. This is UPF0375 protein ule-4 from Caenorhabditis elegans.